A 1431-amino-acid chain; its full sequence is Probable ATP-dependent RNA helicase spindle-E (1431 aa).

The Helicase ATP-binding domain maps to 127-294 (LAAIRENPVV…FAMSSSLPPV (168 aa)). 140 to 147 (GETGCGKT) is an ATP binding site. Residues 240–243 (DEVH) carry the DEAH box motif. Residues 354 to 526 (QSQQSYEEAK…NSVLKAKELE (173 aa)) enclose the Helicase C-terminal domain. Residues 937–1000 (AKAVTKGLQL…RLMSPQLKRD (64 aa)) form the Tudor domain.

Belongs to the DEAD box helicase family. DEAH subfamily.

The protein localises to the cytoplasm. It catalyses the reaction ATP + H2O = ADP + phosphate + H(+). Its function is as follows. Probable ATP-binding RNA helicase which plays a central role during spermatogenesis and oogenesis by repressing transposable elements and preventing their mobilization, which is essential for the germline integrity. Acts via the piRNA metabolic process, which mediates the repression of transposable elements during meiosis by forming complexes composed of piRNAs and Piwi and govern the methylation and subsequent repression of transposons. Involved in the repression of LTR retrotransposon copia. Also involved in telomere regulation by repressing specialized telomeric retroelements HeT-A, TAHRE, and TART; Drosophila telomeres being maintained by transposition of specialized telomeric retroelements. Involved in telomeric trans-silencing, a repression mechanism by which a transposon or a transgene inserted in subtelomeric heterochromatin has the capacity to repress in trans in the female germline, a homologous transposon, or transgene located in euchromatin. Involved in the repression of testis-expressed Stellate genes by the homologous Su(Ste) repeats. Required for anteroposterior and dorsoventral axis formation during oogenesis. This is Probable ATP-dependent RNA helicase spindle-E (spn-E) from Drosophila mojavensis (Fruit fly).